Reading from the N-terminus, the 287-residue chain is 4-hydroxybenzoate octaprenyltransferase (287 aa).

6 consecutive transmembrane segments (helical) span residues Trp41 to Met61, Trp89 to Leu109, Phe133 to Phe153, Asp158 to Tyr178, Phe202 to Ile224, and His266 to Gly286.

It belongs to the UbiA prenyltransferase family. Requires Mg(2+) as cofactor.

It is found in the cell inner membrane. The enzyme catalyses all-trans-octaprenyl diphosphate + 4-hydroxybenzoate = 4-hydroxy-3-(all-trans-octaprenyl)benzoate + diphosphate. The protein operates within cofactor biosynthesis; ubiquinone biosynthesis. Functionally, catalyzes the prenylation of para-hydroxybenzoate (PHB) with an all-trans polyprenyl group. Mediates the second step in the final reaction sequence of ubiquinone-8 (UQ-8) biosynthesis, which is the condensation of the polyisoprenoid side chain with PHB, generating the first membrane-bound Q intermediate 3-octaprenyl-4-hydroxybenzoate. The sequence is that of 4-hydroxybenzoate octaprenyltransferase from Burkholderia orbicola (strain MC0-3).